A 416-amino-acid chain; its full sequence is WD repeat-containing protein JIP5 (416 aa).

WD repeat units lie at residues 9–48 (PLSS…ENGK), 62–101 (RHKG…VEWK), and 112–151 (GFQV…TEVS). The disordered stretch occupies residues 149-183 (EVSARPQQTHHPHDDYVSSLTPLPPSETSTSGYSK). Residues 166–179 (SSLTPLPPSETSTS) show a composition bias toward low complexity. 3 WD repeats span residues 214–255 (ISSS…DQDE), 264–308 (DGGE…ISEL), and 309–348 (SHDD…EEGN). Acidic residues-rich tracts occupy residues 343 to 359 (SDEE…DIEN) and 374 to 383 (SDEEEDSDDD). Positions 343-416 (SDEEGNDDES…VHVMAFKGLD (74 aa)) are disordered. The span at 389-400 (KGKRKKRKRGKG) shows a compositional bias: basic residues.

Belongs to the WD repeat WDR55 family.

The protein localises to the nucleus. The protein resides in the nucleolus. The polypeptide is WD repeat-containing protein JIP5 (JIP5) (Coccidioides immitis (strain RS) (Valley fever fungus)).